We begin with the raw amino-acid sequence, 336 residues long: Holliday junction branch migration complex subunit RuvB (336 aa).

The large ATPase domain (RuvB-L) stretch occupies residues 4-184 (ADRLVSADSS…FGIVQRLEFY (181 aa)). ATP contacts are provided by residues isoleucine 23, arginine 24, glycine 65, lysine 68, threonine 69, threonine 70, 131–133 (EDY), arginine 174, tyrosine 184, and arginine 221. Residue threonine 69 coordinates Mg(2+). Residues 185–255 (QIPDLQHIVS…IAAQALDMLN (71 aa)) form a small ATPAse domain (RuvB-S) region. Residues 258-336 (AEGFDYMDRK…HFGITPPEMP (79 aa)) form a head domain (RuvB-H) region. DNA is bound by residues arginine 294, arginine 313, and arginine 318.

The protein belongs to the RuvB family. Homohexamer. Forms an RuvA(8)-RuvB(12)-Holliday junction (HJ) complex. HJ DNA is sandwiched between 2 RuvA tetramers; dsDNA enters through RuvA and exits via RuvB. An RuvB hexamer assembles on each DNA strand where it exits the tetramer. Each RuvB hexamer is contacted by two RuvA subunits (via domain III) on 2 adjacent RuvB subunits; this complex drives branch migration. In the full resolvosome a probable DNA-RuvA(4)-RuvB(12)-RuvC(2) complex forms which resolves the HJ.

It localises to the cytoplasm. The catalysed reaction is ATP + H2O = ADP + phosphate + H(+). The RuvA-RuvB-RuvC complex processes Holliday junction (HJ) DNA during genetic recombination and DNA repair, while the RuvA-RuvB complex plays an important role in the rescue of blocked DNA replication forks via replication fork reversal (RFR). RuvA specifically binds to HJ cruciform DNA, conferring on it an open structure. The RuvB hexamer acts as an ATP-dependent pump, pulling dsDNA into and through the RuvAB complex. RuvB forms 2 homohexamers on either side of HJ DNA bound by 1 or 2 RuvA tetramers; 4 subunits per hexamer contact DNA at a time. Coordinated motions by a converter formed by DNA-disengaged RuvB subunits stimulates ATP hydrolysis and nucleotide exchange. Immobilization of the converter enables RuvB to convert the ATP-contained energy into a lever motion, pulling 2 nucleotides of DNA out of the RuvA tetramer per ATP hydrolyzed, thus driving DNA branch migration. The RuvB motors rotate together with the DNA substrate, which together with the progressing nucleotide cycle form the mechanistic basis for DNA recombination by continuous HJ branch migration. Branch migration allows RuvC to scan DNA until it finds its consensus sequence, where it cleaves and resolves cruciform DNA. This chain is Holliday junction branch migration complex subunit RuvB, found in Klebsiella pneumoniae subsp. pneumoniae (strain ATCC 700721 / MGH 78578).